The primary structure comprises 844 residues: Patched-related protein 9 (844 aa).

The region spanning 264–421 is the SSD domain; sequence LIPWMPWTSL…VTFFNAVMSL (158 aa).

Belongs to the patched family.

This chain is Patched-related protein 9 (ptr-9), found in Caenorhabditis elegans.